Here is a 115-residue protein sequence, read N- to C-terminus: Peptidyl-tRNA hydrolase (115 aa).

Belongs to the PTH2 family.

It is found in the cytoplasm. It catalyses the reaction an N-acyl-L-alpha-aminoacyl-tRNA + H2O = an N-acyl-L-amino acid + a tRNA + H(+). In terms of biological role, the natural substrate for this enzyme may be peptidyl-tRNAs which drop off the ribosome during protein synthesis. This Methanocaldococcus jannaschii (strain ATCC 43067 / DSM 2661 / JAL-1 / JCM 10045 / NBRC 100440) (Methanococcus jannaschii) protein is Peptidyl-tRNA hydrolase.